Here is a 295-residue protein sequence, read N- to C-terminus: Nicotinate-nucleotide pyrophosphorylase [carboxylating] (295 aa).

Substrate-binding positions include arginine 107, 142–144 (TRK), arginine 166, lysine 176, glutamate 206, aspartate 227, and 256–258 (SGG).

This sequence belongs to the NadC/ModD family. In terms of assembly, hexamer formed by 3 homodimers.

The protein resides in the cytoplasm. The protein localises to the nucleus. The enzyme catalyses nicotinate beta-D-ribonucleotide + CO2 + diphosphate = quinolinate + 5-phospho-alpha-D-ribose 1-diphosphate + 2 H(+). It participates in cofactor biosynthesis; NAD(+) biosynthesis; nicotinate D-ribonucleotide from quinolinate: step 1/1. In terms of biological role, involved in the catabolism of quinolinic acid (QA). This Saccharomyces cerevisiae (strain ATCC 204508 / S288c) (Baker's yeast) protein is Nicotinate-nucleotide pyrophosphorylase [carboxylating] (BNA6).